Here is a 794-residue protein sequence, read N- to C-terminus: MNIDDKLEGLFLKCGGIDEMQSSRAMVVMGGVSGQSAVSGELQESVLQDRSLPHQEILAADEVLQESEMRQQDMISHDELMVHEETVKNDEEQMDTHERLPQGLQYALNVPISVKQEITFTDVSEQLMRDKKQVREPVDLQKKKKRKQRSPAKILTINEDGSLGLKTPKSHVCEHCNAAFRTNYHLQRHVFIHTGEKPFQCSQCDMRFIQKYLLQRHEKIHTGEKPFRCDECGMRFIQKYHMERHKRTHSGEKPYQCEYCLQYFSRTDRVLKHKRMCHENHDKKLNRCAIKGGLLTSEEDSGFSTSPKDNSLPKKKRQKTEKKSSGMDKESVLDKSDLKKDKNDYLPLYSSSTKVKDEYMVAEYAVEMPHSSVGGSHLEDASGEIHPPKLVLKKINSKRSLKQPLEQSQTISPLSSYEDSKVSKYAFELVDKQALLDSEGSADIDQVDNLQEGPSKPVHSSTNYDDAMQFLKKKRYLQAASNNSREYALNVGTIASQPSVTQAAVASVIDESTTASILDSQALNVEIKSNHDKNVIPDEVLQTLLDHYSHKPNGQHEISFSVADTEVTSSISINSSDVPEVTQSENVGSSSQASSSDKANMLQEYSKFLQQALDRTSQNDAYLNSPSLNFVTDNQTLPNPPAFSSIDKQVYAAMPINSFRSGMNSPLRTTPDKSHFGLIVGDSQHPFPFSGDETNHASATSTADFLDQVTSQKKAEAQPVHQAYQMSSFEQPFRAPYHGSRAGIATQFSTANGQVNLRGPGTSAEFSEFPLVNVNDNRAGMTSSPDATTGQTFG.

Lysine 6 is covalently cross-linked (Glycyl lysine isopeptide (Lys-Gly) (interchain with G-Cter in SUMO2)). A Phosphoserine modification is found at serine 51. Residues lysine 88, lysine 115, and lysine 132 each participate in a glycyl lysine isopeptide (Lys-Gly) (interchain with G-Cter in SUMO2) cross-link. The C2H2-type 1 zinc-finger motif lies at 171–193; that stretch reads HVCEHCNAAFRTNYHLQRHVFIH. Residue threonine 194 is modified to Phosphothreonine. C2H2-type zinc fingers lie at residues 199–221 and 227–249; these read FQCS…EKIH and FRCD…KRTH. The residue at position 250 (serine 250) is a Phosphoserine. Residues 255 to 278 form a C2H2-type 4 zinc finger; the sequence is YQCEYCLQYFSRTDRVLKHKRMCH. Residue lysine 291 forms a Glycyl lysine isopeptide (Lys-Gly) (interchain with G-Cter in SUMO2) linkage. The disordered stretch occupies residues 298 to 336; the sequence is EEDSGFSTSPKDNSLPKKKRQKTEKKSSGMDKESVLDKS. A phosphoserine mark is found at serine 301 and serine 306. Lysine 308 participates in a covalent cross-link: Glycyl lysine isopeptide (Lys-Gly) (interchain with G-Cter in SUMO2). The segment covering 321 to 336 has biased composition (basic and acidic residues); sequence EKKSSGMDKESVLDKS. Lysine 356 participates in a covalent cross-link: Glycyl lysine isopeptide (Lys-Gly) (interchain with G-Cter in SUMO1); alternate. Lysine 356 participates in a covalent cross-link: Glycyl lysine isopeptide (Lys-Gly) (interchain with G-Cter in SUMO2); alternate. Lysine 402 participates in a covalent cross-link: Glycyl lysine isopeptide (Lys-Gly) (interchain with G-Cter in SUMO2). Serine 412 is subject to Phosphoserine. Residues lysine 421 and lysine 424 each participate in a glycyl lysine isopeptide (Lys-Gly) (interchain with G-Cter in SUMO2) cross-link. A compositionally biased stretch (polar residues) spans 574-588; that stretch reads NSSDVPEVTQSENVG. The disordered stretch occupies residues 574-599; that stretch reads NSSDVPEVTQSENVGSSSQASSSDKA. Lysine 607 is subject to N6-acetyllysine. Phosphoserine is present on residues serine 665 and serine 784.

This sequence belongs to the krueppel C2H2-type zinc-finger protein family. Interacts with HNRNPDL. Interacts with the 5FMC complex; the interaction requires association with CHTOP. Interacts with CAVIN1. In terms of processing, sumoylated with SUMO2. Desumoylated by SENP3, resulting in the stimulation of transcription of its target genes. In terms of tissue distribution, strong expression detected in brain, lung, liver and kidney, with lower levels detected in spleen, skeletal muscle, testis and heart.

The protein resides in the nucleus. Functionally, involved in transcriptional regulation. Represses the transcription of a number of genes including gastrin, stromelysin and enolase. Binds to the G-rich box in the enhancer region of these genes. This chain is Zinc finger protein 148 (Znf148), found in Mus musculus (Mouse).